Reading from the N-terminus, the 565-residue chain is Carboxylesterase 1D (565 aa).

A signal peptide spans 1 to 18 (MGLYPLIWLSLAACTAWG). Residue N79 is glycosylated (N-linked (GlcNAc...) asparagine). C87 and C116 form a disulfide bridge. The active-site Acyl-ester intermediate is the S221. A disulfide bond links C273 and C284. The Charge relay system role is filled by E353. K382 is subject to N6-succinyllysine. H466 acts as the Charge relay system in catalysis. An N-linked (GlcNAc...) asparagine glycan is attached at N489. The Prevents secretion from ER motif lies at 562–565 (HVEL).

It belongs to the type-B carboxylesterase/lipase family. As to quaternary structure, homotrimer. In terms of tissue distribution, highest expression occurs in liver with lower levels in adipose tissue, kidney, heart, intestine, lung, testis and thymus.

It localises to the endoplasmic reticulum lumen. It is found in the cytoplasm. The protein localises to the cytosol. Its subcellular location is the lipid droplet. The protein resides in the microsome. The catalysed reaction is a carboxylic ester + H2O = an alcohol + a carboxylate + H(+). It carries out the reaction a long-chain fatty acyl ethyl ester + H2O = a long-chain fatty acid + ethanol + H(+). It catalyses the reaction all-trans-retinyl hexadecanoate + H2O = all-trans-retinol + hexadecanoate + H(+). Its function is as follows. Major lipase in white adipose tissue. Involved in the metabolism of xenobiotics and of natural substrates. Hydrolyzes triacylglycerols and monoacylglycerols, with a preference for monoacylglycerols. The susceptibility of the substrate increases with decreasing acyl chain length of the fatty acid moiety. Catalyzes the synthesis of fatty acid ethyl esters. Hydrolyzes retinyl esters. This Mus musculus (Mouse) protein is Carboxylesterase 1D.